The following is a 21-amino-acid chain: Nigrocin-2GRb (21 aa).

Expressed by the skin glands.

It localises to the secreted. Antimicrobial peptide active against the Gram-positive bacterium S.aureus (MIC=12.5 uM) and against the Gram-negative bacteria E.coli (MIC=3 uM). Has antifungal activity against C.albicans (MIC=50 uM). Has some hemolytic activity against human erythrocytes (LC(50)=40 uM). The chain is Nigrocin-2GRb from Odorrana grahami (Yunnanfu frog).